The primary structure comprises 221 residues: Histone H1.3 (221 aa).

Low complexity predominate over residues 1-17; that stretch reads MSETAPVAPAAPAPAEK. The tract at residues 1-42 is disordered; that stretch reads MSETAPVAPAAPAPAEKTPVKKKAKKSGVAAGKRKASGPPVS. Ser2 is subject to N-acetylserine. The residue at position 2 (Ser2) is a Phosphoserine. Lys17 carries the post-translational modification N6-acetyllysine. At Thr18 the chain carries Phosphothreonine. Positions 20–36 are enriched in basic residues; that stretch reads VKKKAKKSGVAAGKRKA. 2 positions are modified to N6-(beta-hydroxybutyryl)lysine: Lys35 and Lys53. An H15 domain is found at 37 to 110; it reads SGPPVSELIT…GASGSFKLNK (74 aa). Arg55 carries the post-translational modification Citrulline. N6-(beta-hydroxybutyryl)lysine is present on residues Lys65, Lys86, and Lys91. Positions 87–221 are disordered; it reads SLVSKGTLVQ…KAKKAVSKKK (135 aa). Position 105 is a phosphoserine; by PKC (Ser105). Position 107 is an N6-(beta-hydroxybutyryl)lysine (Lys107). 4 stretches are compositionally biased toward basic residues: residues 120–141, 150–161, 170–187, and 194–221; these read KGKKAGAAKPKKAAGAAKKPKK, KAAKKTPKKVKK, KVAKSPKKAKAAKPKKPT, and KAPKPKAAKPKAAKPKATKAKKAVSKKK.

Belongs to the histone H1/H5 family. Post-translationally, H1 histones are progressively phosphorylated during the cell cycle, becoming maximally phosphorylated during late G2 phase and M phase, and being dephosphorylated sharply thereafter. In terms of processing, citrullination at Arg-55 (H1R54ci) by PADI4 takes place within the DNA-binding site of H1 and results in its displacement from chromatin and global chromatin decondensation, thereby promoting pluripotency and stem cell maintenance.

Its subcellular location is the nucleus. The protein resides in the chromosome. Functionally, H1 histones bind to linker DNA between nucleosomes forming the macromolecular structure known as the chromatin fiber. H1 histones are necessary for the condensation of nucleosome chains into higher-order structured fibers. Also acts as a regulator of individual gene transcription through chromatin remodeling, nucleosome spacing and DNA methylation. The polypeptide is Histone H1.3 (Bos taurus (Bovine)).